A 202-amino-acid polypeptide reads, in one-letter code: Probable nicotinate-nucleotide adenylyltransferase (202 aa).

It belongs to the NadD family.

It catalyses the reaction nicotinate beta-D-ribonucleotide + ATP + H(+) = deamido-NAD(+) + diphosphate. It participates in cofactor biosynthesis; NAD(+) biosynthesis; deamido-NAD(+) from nicotinate D-ribonucleotide: step 1/1. In terms of biological role, catalyzes the reversible adenylation of nicotinate mononucleotide (NaMN) to nicotinic acid adenine dinucleotide (NaAD). This is Probable nicotinate-nucleotide adenylyltransferase from Clostridium perfringens (strain 13 / Type A).